We begin with the raw amino-acid sequence, 238 residues long: Uridylate kinase (238 aa).

ATP is bound at residue 12–15; sequence KLSG. G54 provides a ligand contact to UMP. ATP-binding residues include G55 and R59. Residues D74 and 135 to 142 each bind UMP; that span reads TGNPYFTT. The ATP site is built by T162, Y168, and D171.

Belongs to the UMP kinase family. As to quaternary structure, homohexamer.

The protein resides in the cytoplasm. It carries out the reaction UMP + ATP = UDP + ADP. It participates in pyrimidine metabolism; CTP biosynthesis via de novo pathway; UDP from UMP (UMPK route): step 1/1. Its activity is regulated as follows. Inhibited by UTP. Functionally, catalyzes the reversible phosphorylation of UMP to UDP. The polypeptide is Uridylate kinase (Nitratidesulfovibrio vulgaris (strain ATCC 29579 / DSM 644 / CCUG 34227 / NCIMB 8303 / VKM B-1760 / Hildenborough) (Desulfovibrio vulgaris)).